We begin with the raw amino-acid sequence, 105 residues long: uncharacterized protein (105 aa).

Residues 31–47 (SVNLPSPSVKPSVTPSV) are compositionally biased toward low complexity. The tract at residues 31 to 80 (SVNLPSPSVKPSVTPSVKKPPHVIRSDYSKPREKPAKVAKKPTVKNDKKP) is disordered. The segment covering 54-66 (IRSDYSKPREKPA) has biased composition (basic and acidic residues).

This is an uncharacterized protein from Caenorhabditis elegans.